The following is a 440-amino-acid chain: Nuclear fusion protein BIK1 (440 aa).

One can recognise a CAP-Gly domain in the interval 26–69 (GPVDTKAGMFAGVDLLANIGKNDGSFMGKKYFQTEYPQSGLFIQ). Residues S95 and S110 each carry the phosphoserine modification. The interval 108 to 157 (QFSPMDDPKSPTPMRSFRITSRHSGNQQSMDQEASDHHQQQEFGYDNRED) is disordered. Polar residues predominate over residues 125 to 139 (RITSRHSGNQQSMDQ). A compositionally biased stretch (basic and acidic residues) spans 141–157 (ASDHHQQQEFGYDNRED). Positions 190 to 397 (NSSEVTIELR…AQAQTAVESL (208 aa)) form a coiled coil. Residues 416–429 (CEHCDTMGHNTAEC) carry the CCHC-box motif.

It localises to the cytoplasm. It is found in the cytoskeleton. Its subcellular location is the microtubule organizing center. The protein localises to the spindle pole body. The protein resides in the spindle. Required for nuclear fusion, chromosome disjunction, and nuclear segregation during mitosis. Probably required for the formation or stabilization of microtubules during mitosis and for spindle pole body fusion during conjugation. This chain is Nuclear fusion protein BIK1 (BIK1), found in Saccharomyces cerevisiae (strain ATCC 204508 / S288c) (Baker's yeast).